Here is a 284-residue protein sequence, read N- to C-terminus: 4-diphosphocytidyl-2-C-methyl-D-erythritol kinase (284 aa).

Residue K17 is part of the active site. An ATP-binding site is contributed by 100 to 110; the sequence is PMGGGLGGGSS. D142 is an active-site residue.

This sequence belongs to the GHMP kinase family. IspE subfamily.

It carries out the reaction 4-CDP-2-C-methyl-D-erythritol + ATP = 4-CDP-2-C-methyl-D-erythritol 2-phosphate + ADP + H(+). It participates in isoprenoid biosynthesis; isopentenyl diphosphate biosynthesis via DXP pathway; isopentenyl diphosphate from 1-deoxy-D-xylulose 5-phosphate: step 3/6. Its function is as follows. Catalyzes the phosphorylation of the position 2 hydroxy group of 4-diphosphocytidyl-2C-methyl-D-erythritol. In Aromatoleum aromaticum (strain DSM 19018 / LMG 30748 / EbN1) (Azoarcus sp. (strain EbN1)), this protein is 4-diphosphocytidyl-2-C-methyl-D-erythritol kinase.